The following is a 333-amino-acid chain: D-threonate 4-phosphate dehydrogenase (333 aa).

Substrate contacts are provided by His-140 and Thr-141. A divalent metal cation contacts are provided by His-170, His-214, and His-270. Residues Lys-278, Asn-287, and Arg-296 each coordinate substrate.

The protein belongs to the PdxA family. PdxA2 subfamily. In terms of assembly, homodimer. It depends on a divalent metal cation as a cofactor.

It carries out the reaction 4-O-phospho-D-threonate + NAD(+) = dihydroxyacetone phosphate + CO2 + NADH. Catalyzes the NAD-dependent oxidation and subsequent decarboxylation of D-threonate 4-phosphate to produce dihydroxyacetone phosphate (DHAP). Can also use 4-hydroxy-L-threonine 4-phosphate as substrate. This is D-threonate 4-phosphate dehydrogenase from Cupriavidus necator (strain ATCC 17699 / DSM 428 / KCTC 22496 / NCIMB 10442 / H16 / Stanier 337) (Ralstonia eutropha).